The chain runs to 506 residues: ATP synthase subunit alpha, chloroplastic (506 aa).

Position 170–177 (170–177 (GDRQTGKT)) interacts with ATP.

It belongs to the ATPase alpha/beta chains family. As to quaternary structure, F-type ATPases have 2 components, CF(1) - the catalytic core - and CF(0) - the membrane proton channel. CF(1) has five subunits: alpha(3), beta(3), gamma(1), delta(1), epsilon(1). CF(0) has four main subunits: a, b, b' and c.

It is found in the plastid. The protein resides in the chloroplast thylakoid membrane. The catalysed reaction is ATP + H2O + 4 H(+)(in) = ADP + phosphate + 5 H(+)(out). Its function is as follows. Produces ATP from ADP in the presence of a proton gradient across the membrane. The alpha chain is a regulatory subunit. This is ATP synthase subunit alpha, chloroplastic from Chlorella vulgaris (Green alga).